Reading from the N-terminus, the 441-residue chain is Cysteine--tRNA ligase (441 aa).

Cysteine 24 provides a ligand contact to Zn(2+). The short motif at 26–36 is the 'HIGH' region element; that stretch reads PTIYDYIHIGN. Positions 204, 230, and 234 each coordinate Zn(2+). A 'KMSKS' region motif is present at residues 262–266; that stretch reads KMSKS. Lysine 265 serves as a coordination point for ATP.

The protein belongs to the class-I aminoacyl-tRNA synthetase family. In terms of assembly, monomer. Zn(2+) serves as cofactor.

It localises to the cytoplasm. It carries out the reaction tRNA(Cys) + L-cysteine + ATP = L-cysteinyl-tRNA(Cys) + AMP + diphosphate. The sequence is that of Cysteine--tRNA ligase from Mesoplasma florum (strain ATCC 33453 / NBRC 100688 / NCTC 11704 / L1) (Acholeplasma florum).